The chain runs to 275 residues: MAASAQKLLGRLGTVGVGLSIAGGIAQTALYNVDGGQRAVIFDRFSGVKNEVVGEGTHFLIPWVQKPIIFDIRSTPRAVTTITGSKDLQNVNITLRILHRPSPDRLPNIYLNIGLDYAERVLPSITNEVLKAVVAQFDAHEMITQREVVSQRASVALRERAAQFGLLLDDIAITHLNFGREFTEAVEMKQVAQQEAEKARYLVEKAEQMKIAAVTTAEGDAQAAKLLAKAFASAGDGLVELRKIEAAEEIAERMAKNKNVTYLPGNQQTLLNLQS.

Residues 180–213 (REFTEAVEMKQVAQQEAEKARYLVEKAEQMKIAA) adopt a coiled-coil conformation.

Belongs to the prohibitin family. In terms of assembly, high molecular weight complex that consist of phb-1 and phb-2.

It localises to the mitochondrion inner membrane. Functionally, PHB proteins are essential during embryonic development and are required for somatic and germline differentiation in the larval gonad. A deficiency in PHB proteins results in altered mitochondrial biogenesis in body wall muscle cells. The chain is Mitochondrial prohibitin complex protein 1 (phb-1) from Caenorhabditis elegans.